The following is a 104-amino-acid chain: ATP-dependent Clp protease adapter protein ClpS (104 aa).

Belongs to the ClpS family. Binds to the N-terminal domain of the chaperone ClpA.

Involved in the modulation of the specificity of the ClpAP-mediated ATP-dependent protein degradation. The polypeptide is ATP-dependent Clp protease adapter protein ClpS (Hydrogenovibrio crunogenus (strain DSM 25203 / XCL-2) (Thiomicrospira crunogena)).